A 68-amino-acid polypeptide reads, in one-letter code: Conotoxin Cal12.1p1 (68 aa).

The propeptide occupies 1–23; that stretch reads DLITNSYTRGKPRHVTSWRNLRT.

In terms of processing, contains 4 disulfide bonds. In terms of tissue distribution, expressed by the venom duct.

The protein localises to the secreted. The chain is Conotoxin Cal12.1p1 from Californiconus californicus (California cone).